Reading from the N-terminus, the 371-residue chain is Transcriptional regulator of yeast form adherence 2 (371 aa).

The C3H1-type 1 zinc finger occupies 16-44 (RNPAVLCSFYSKIGACRHGEKCSKKHLKP). Over residues 94–107 (TVSQIDDSPHSNSG) the composition is skewed to polar residues. A disordered region spans residues 94–194 (TVSQIDDSPH…NIEDAKLEDT (101 aa)). Residues 115–124 (VETQEVETEN) are compositionally biased toward acidic residues. The segment covering 132–194 (GDVKIDHNED…NIEDAKLEDT (63 aa)) has biased composition (basic and acidic residues). An RRM domain is found at 192-279 (EDTEKDKLPE…KPVYSDLSPV (88 aa)). The C3H1-type 2 zinc finger occupies 281–309 (DFNDACCEEYRDYHDCQRGAMCNYMHVRL). A disordered region spans residues 337–371 (ELPGDIRSSSSTNDDETNGNENGISSTMAVLEQLS). Positions 355-371 (GNENGISSTMAVLEQLS) are enriched in polar residues.

The protein resides in the nucleus. Its function is as follows. Transcription factor required for yeast cell adherence to silicone substrate. In Candida albicans (strain SC5314 / ATCC MYA-2876) (Yeast), this protein is Transcriptional regulator of yeast form adherence 2 (TRY2).